The primary structure comprises 316 residues: Taste receptor type 2 member 109 (316 aa).

The Extracellular segment spans residues 1 to 14 (MEHLLKRTFDITEN). A helical membrane pass occupies residues 15–35 (ILLIILFIELIIGLIGNGFTA). The Cytoplasmic portion of the chain corresponds to 36 to 62 (LVHCMDWVKRKKMSLVNKILTALATSR). A helical membrane pass occupies residues 63–83 (IFLLWFMLVGFPISSLYPYLV). Residues 84-94 (TTRLMIQFTST) lie on the Extracellular side of the membrane. Residues 95-115 (LWTIANHISVWFATCLSVFYF) form a helical membrane-spanning segment. Over 116–135 (LKIANFSNSPFLYLKRRVEK) the chain is Cytoplasmic. Residues 136–156 (VVSVTLLVSLVLLFLNILLLN) form a helical membrane-spanning segment. Topologically, residues 157 to 191 (LEINMCINEYHQINISYIFISYYHLSCQIQVLGSH) are extracellular. N170 carries an N-linked (GlcNAc...) asparagine glycan. The chain crosses the membrane as a helical span at residues 192–212 (IIFLSVPVVLSLSTFLLLIFS). At 213 to 241 (LWTLHKRMQQHVQGGRDARTTAHFKALQA) the chain is on the cytoplasmic side. Residues 242-262 (VIAFLLLYSIFILSLLLQFWI) form a helical membrane-spanning segment. Residues 263 to 270 (HGLRKKPP) lie on the Extracellular side of the membrane. A helical membrane pass occupies residues 271–291 (FIAFCQVVDTAFPSFHSYVLI). The Cytoplasmic portion of the chain corresponds to 292-316 (LRDRKLRHASLSVLSWLKCRPNYVK).

Belongs to the G-protein coupled receptor T2R family.

The protein resides in the membrane. Putative taste receptor which may play a role in the perception of bitterness. The polypeptide is Taste receptor type 2 member 109 (Mus musculus (Mouse)).